A 405-amino-acid polypeptide reads, in one-letter code: LanC-like protein GCL2 (405 aa).

Positions 278, 323, and 324 each coordinate Zn(2+).

The protein belongs to the LanC-like protein family.

In terms of biological role, may play a role in signaling. May be not involved in abscisic acid (ABA) signaling. This chain is LanC-like protein GCL2 (GCL2), found in Arabidopsis thaliana (Mouse-ear cress).